The sequence spans 416 residues: Peptide chain release factor subunit 1 (416 aa).

The protein belongs to the eukaryotic release factor 1 family. As to quaternary structure, heterodimer of two subunits, one of which binds GTP.

Its subcellular location is the cytoplasm. Directs the termination of nascent peptide synthesis (translation) in response to the termination codons UAA, UAG and UGA. The polypeptide is Peptide chain release factor subunit 1 (Halorubrum lacusprofundi (strain ATCC 49239 / DSM 5036 / JCM 8891 / ACAM 34)).